Here is a 124-residue protein sequence, read N- to C-terminus: Flowering-promoting factor 1-like protein 1 (124 aa).

The tract at residues 19–42 is disordered; that stretch reads PYNQSAGDSSESSSSGGNQQQRMR. Over residues 22–39 the composition is skewed to low complexity; it reads QSAGDSSESSSSGGNQQQ.

The protein belongs to the FPF1 family. As to expression, expressed in roots, flowers, and at a low level, in leaves.

Its function is as follows. Modulates the competence to flowering of apical meristems. In Arabidopsis thaliana (Mouse-ear cress), this protein is Flowering-promoting factor 1-like protein 1 (FLP1).